The following is a 332-amino-acid chain: Glyceraldehyde-3-phosphate dehydrogenase 1 (332 aa).

Arginine 11, isoleucine 12, aspartate 33, and threonine 120 together coordinate NAD(+). D-glyceraldehyde 3-phosphate is bound by residues 149–151, threonine 180, 209–210, and arginine 232; these read SCT and TG. The active-site Nucleophile is cysteine 150. 2 residues coordinate NAD(+): asparagine 314 and tyrosine 318.

Belongs to the glyceraldehyde-3-phosphate dehydrogenase family. In terms of assembly, homotetramer.

It localises to the cytoplasm. The enzyme catalyses D-glyceraldehyde 3-phosphate + phosphate + NAD(+) = (2R)-3-phospho-glyceroyl phosphate + NADH + H(+). The catalysed reaction is NADH + H2O = (6R)-NADHX. It carries out the reaction NADH + H2O = (6S)-NADHX. It catalyses the reaction NADPH + H2O = (6R)-NADPHX. The enzyme catalyses NADPH + H2O = (6S)-NADPHX. It participates in carbohydrate degradation; glycolysis; pyruvate from D-glyceraldehyde 3-phosphate: step 1/5. Functionally, glyceraldehyde-3-phosphate dehydrogenase (GAPDH) involved in glycolysis and gluconeogenesis. Catalyzes the reaction of glyceraldehyde-3-phosphate to 1,3 bis-phosphoglycerate. The contribution of the TDH1, TDH2, and TDH3 to the total glyceraldehyde-3-phosphate dehydrogenase activity is 10-15, 25-30, and 50-60%, respectively. May be involved in a process other than glycolysis because it is synthesized by cells in stationary phase. In terms of biological role, as a side activity, catalyzes the hydration of the nicotinamide ring of NADH or NADPH at the C6 position to give the corresponding hydrates, NADHX and NADPHX, which exist as R and S epimers, that cannot act as electron donors or acceptors and inhibit several dehydrogenases, making them toxic. In Saccharomyces cerevisiae (strain ATCC 204508 / S288c) (Baker's yeast), this protein is Glyceraldehyde-3-phosphate dehydrogenase 1.